The chain runs to 575 residues: Probable cytochrome P450 514A1 (575 aa).

A helical transmembrane segment spans residues 4–24 (IFTIILTITILVLSLILKDLL). Cys-448 contacts heme.

Belongs to the cytochrome P450 family. It depends on heme as a cofactor.

It localises to the membrane. The sequence is that of Probable cytochrome P450 514A1 (cyp514A1) from Dictyostelium discoideum (Social amoeba).